Here is a 153-residue protein sequence, read N- to C-terminus: Proline-rich membrane anchor 1 (153 aa).

The signal sequence occupies residues Met-1–Gly-35. The Extracellular portion of the chain corresponds to Glu-36–Gly-92. A PRAD domain is found at Pro-56–Pro-70. A compositionally biased stretch (pro residues) spans Pro-59–Arg-71. The tract at residues Pro-59–Asn-79 is disordered. Asn-79 carries N-linked (GlcNAc...) asparagine glycosylation. Residues Leu-93–Ile-113 traverse the membrane as a helical segment. Topologically, residues Cys-114–Val-153 are cytoplasmic.

In terms of assembly, interacts with ACHE, probably through disulfide bonds.

The protein localises to the cell membrane. The protein resides in the cell junction. It localises to the synapse. Functionally, required to anchor acetylcholinesterase (ACHE) to the basal lamina of the neuromuscular junction and to the membrane of neuronal synapses in brain. Also able to organize ACHE into tetramers. This Homo sapiens (Human) protein is Proline-rich membrane anchor 1 (PRIMA1).